A 903-amino-acid polypeptide reads, in one-letter code: E3 ubiquitin-protein ligase DDB_G0292642 (903 aa).

5 disordered regions span residues 115–137 (FTLP…SSSD), 167–236 (LLKR…VIGS), 284–366 (VNKT…NNLK), 415–487 (TPSL…TTEI), and 549–576 (DDSE…GSEG). Composition is skewed to low complexity over residues 120–130 (TTNNNNNNTTN) and 178–216 (TTTT…TIDT). Residues 217–232 (SSEDDDESISSSDDDI) are compositionally biased toward acidic residues. Composition is skewed to low complexity over residues 287–301 (TSTT…TTTT) and 311–323 (NRNN…NNNN). Residues 313-352 (NNNNNNNNNNNKRFEIESEEESETDISSEEEENNNNNNNN) adopt a coiled-coil conformation. The segment covering 329 to 345 (ESEEESETDISSEEEEN) has biased composition (acidic residues). The segment covering 346-364 (NNNNNNNSNNNNNSNNNNN) has biased composition (low complexity). A compositionally biased stretch (polar residues) spans 415-427 (TPSLRLSSAHLPN). The span at 428–443 (TTTTTTTTTTTTTTTT) shows a compositional bias: low complexity. Composition is skewed to acidic residues over residues 451 to 466 (NDDD…DSEI) and 549 to 568 (DDSE…ESDS). Residues 542 to 569 (AELVFEYDDSEEEEEEEEEEEGEESDSE) adopt a coiled-coil conformation. A TRIAD supradomain region spans residues 612–832 (EPVECKICYM…NEYPECFDRQ (221 aa)). Positions 616, 619, 634, 636, 639, 642, 661, 666, 704, 709, 725, 728, 733, 736, 741, 746, 782, and 785 each coordinate Zn(2+). Residues 616–666 (CKICYMEYDQSNEVFTLECDHVYCFDCITEHLRILITEGRVLDISCPHPQC) form an RING-type 1 zinc finger. The IBR-type zinc finger occupies 683 to 746 (NWLKYQKFSM…GEYSHEGAKC (64 aa)). The RING-type 2; atypical zinc-finger motif lies at 782–811 (CPTCKSHIEKHDGCNHMTCINCQHQFCWLC). Cys795 is a catalytic residue. Positions 800, 803, 808, 811, 819, and 828 each coordinate Zn(2+). The helical transmembrane segment at 864–884 (TAAFTVGAPLLLIGGAVLLCV) threads the bilayer.

Belongs to the RBR family. RNF14 subfamily.

It is found in the membrane. The catalysed reaction is [E2 ubiquitin-conjugating enzyme]-S-ubiquitinyl-L-cysteine + [acceptor protein]-L-lysine = [E2 ubiquitin-conjugating enzyme]-L-cysteine + [acceptor protein]-N(6)-ubiquitinyl-L-lysine.. Its pathway is protein modification; protein ubiquitination. In terms of biological role, E3 ubiquitin-protein ligase. This is E3 ubiquitin-protein ligase DDB_G0292642 from Dictyostelium discoideum (Social amoeba).